The sequence spans 351 residues: uncharacterized protein (351 aa).

Positions 1-32 (MKNKKRVFIASSLSCVLLLLSAANTEANSANK) are cleaved as a signal peptide. The interval 26 to 74 (EANSANKDSQDQTKKEHVDKAQQKEKRNVNDKDKNTPGPDDIGKNGKVT) is disordered. Residues 33–60 (DSQDQTKKEHVDKAQQKEKRNVNDKDKN) are compositionally biased toward basic and acidic residues.

This sequence belongs to the aerolysin family.

This is an uncharacterized protein from Staphylococcus aureus (strain MRSA252).